The primary structure comprises 531 residues: T-complex protein 1 subunit zeta (531 aa).

The residue at position 2 (alanine 2) is an N-acetylalanine. Lysine 5 bears the N6-acetyllysine mark. Glycine 39 serves as a coordination point for ADP. Glycine 39 contacts ATP. Aspartate 90 serves as a coordination point for Mg(2+). ADP contacts are provided by glycine 91, threonine 92, threonine 93, serine 94, threonine 158, and lysine 159. Glycine 91, threonine 92, and threonine 93 together coordinate ATP. Position 199 is an N6-acetyllysine (lysine 199). At serine 205 the chain carries Phosphoserine. A Glycyl lysine isopeptide (Lys-Gly) (interchain with G-Cter in SUMO2) cross-link involves residue lysine 251. Lysine 287, lysine 365, lysine 377, and lysine 388 each carry N6-acetyllysine. Alanine 411 lines the ADP pocket. ATP-binding residues include alanine 411, glycine 412, aspartate 496, and lysine 501. Residue aspartate 496 coordinates ADP.

This sequence belongs to the TCP-1 chaperonin family. As to quaternary structure, component of the chaperonin-containing T-complex (TRiC), a hexadecamer composed of two identical back-to-back stacked rings enclosing a protein folding chamber. Each ring is made up of eight different subunits: TCP1/CCT1, CCT2, CCT3, CCT4, CCT5, CCT6A/CCT6, CCT7, CCT8. Interacts with PACRG.

The protein resides in the cytoplasm. It catalyses the reaction ATP + H2O = ADP + phosphate + H(+). Functionally, component of the chaperonin-containing T-complex (TRiC), a molecular chaperone complex that assists the folding of actin, tubulin and other proteins upon ATP hydrolysis. The TRiC complex mediates the folding of WRAP53/TCAB1, thereby regulating telomere maintenance. The protein is T-complex protein 1 subunit zeta (CCT6) of Oryctolagus cuniculus (Rabbit).